We begin with the raw amino-acid sequence, 306 residues long: ORF-B protein (306 aa).

3 consecutive transmembrane segments (helical) span residues 92–112 (MIQW…FPFI), 120–140 (LTHL…VFGW), and 161–181 (VIEW…IVVS).

As to quaternary structure, interacts with host RACK1.

The protein localises to the host cytoplasm. It localises to the host cell membrane. This chain is ORF-B protein, found in Sander vitreus (Walleye).